The following is a 200-amino-acid chain: MAVRMSKVERQRLLKEKINTNPFYTDDELAEMFGVSVQTIRLDRMELGIPEVRERIKSVAEENYQKVRTITGTEVVGELIDLELGKRGISIFEPTEDMVFVKTKIVKGQYIYSQAESLAMSVIDASAALIGVANIKYKFPVKVGDRLVAKAEVIRQRGNKYFVWVKIKVKDKEVFRGKFILVAIDEDFLKKRSDTVEVSN.

Belongs to the FapR family.

Its function is as follows. Transcriptional factor involved in regulation of membrane lipid biosynthesis by repressing genes involved in fatty acid and phospholipid metabolism. The protein is Transcription factor FapR of Thermoanaerobacter pseudethanolicus (strain ATCC 33223 / 39E) (Clostridium thermohydrosulfuricum).